The sequence spans 205 residues: Methylthioribulose-1-phosphate dehydratase (205 aa).

Zn(2+)-binding residues include His-94 and His-96.

Belongs to the aldolase class II family. MtnB subfamily. Requires Zn(2+) as cofactor.

It carries out the reaction 5-(methylsulfanyl)-D-ribulose 1-phosphate = 5-methylsulfanyl-2,3-dioxopentyl phosphate + H2O. It participates in amino-acid biosynthesis; L-methionine biosynthesis via salvage pathway; L-methionine from S-methyl-5-thio-alpha-D-ribose 1-phosphate: step 2/6. Its function is as follows. Catalyzes the dehydration of methylthioribulose-1-phosphate (MTRu-1-P) into 2,3-diketo-5-methylthiopentyl-1-phosphate (DK-MTP-1-P). The protein is Methylthioribulose-1-phosphate dehydratase of Pectobacterium carotovorum subsp. carotovorum (strain PC1).